The sequence spans 81 residues: Cell division protein ZapB (81 aa).

The stretch at 5–81 (LEVFEKLESK…QALLGRMEEV (77 aa)) forms a coiled coil. Residues 43–64 (VHSAQNGREELERENQQLREQQ) are disordered. Positions 49-59 (GREELERENQQ) are enriched in basic and acidic residues.

It belongs to the ZapB family. As to quaternary structure, homodimer. The ends of the coiled-coil dimer bind to each other, forming polymers. Interacts with FtsZ.

It localises to the cytoplasm. Non-essential, abundant cell division factor that is required for proper Z-ring formation. It is recruited early to the divisome by direct interaction with FtsZ, stimulating Z-ring assembly and thereby promoting cell division earlier in the cell cycle. Its recruitment to the Z-ring requires functional FtsA or ZipA. The sequence is that of Cell division protein ZapB from Enterobacter sp. (strain 638).